The chain runs to 308 residues: 4-hydroxy-3-methylbut-2-enyl diphosphate reductase (308 aa).

C12 serves as a coordination point for [4Fe-4S] cluster. Residues H43 and H77 each coordinate (2E)-4-hydroxy-3-methylbut-2-enyl diphosphate. H43 and H77 together coordinate dimethylallyl diphosphate. Residues H43 and H77 each coordinate isopentenyl diphosphate. [4Fe-4S] cluster is bound at residue C99. H127 lines the (2E)-4-hydroxy-3-methylbut-2-enyl diphosphate pocket. H127 contributes to the dimethylallyl diphosphate binding site. An isopentenyl diphosphate-binding site is contributed by H127. Catalysis depends on E129, which acts as the Proton donor. T167 lines the (2E)-4-hydroxy-3-methylbut-2-enyl diphosphate pocket. Position 197 (C197) interacts with [4Fe-4S] cluster. Residues S225, S226, N227, and S269 each contribute to the (2E)-4-hydroxy-3-methylbut-2-enyl diphosphate site. Dimethylallyl diphosphate-binding residues include S225, S226, N227, and S269. The isopentenyl diphosphate site is built by S225, S226, N227, and S269.

It belongs to the IspH family. Requires [4Fe-4S] cluster as cofactor.

It carries out the reaction isopentenyl diphosphate + 2 oxidized [2Fe-2S]-[ferredoxin] + H2O = (2E)-4-hydroxy-3-methylbut-2-enyl diphosphate + 2 reduced [2Fe-2S]-[ferredoxin] + 2 H(+). It catalyses the reaction dimethylallyl diphosphate + 2 oxidized [2Fe-2S]-[ferredoxin] + H2O = (2E)-4-hydroxy-3-methylbut-2-enyl diphosphate + 2 reduced [2Fe-2S]-[ferredoxin] + 2 H(+). It participates in isoprenoid biosynthesis; dimethylallyl diphosphate biosynthesis; dimethylallyl diphosphate from (2E)-4-hydroxy-3-methylbutenyl diphosphate: step 1/1. The protein operates within isoprenoid biosynthesis; isopentenyl diphosphate biosynthesis via DXP pathway; isopentenyl diphosphate from 1-deoxy-D-xylulose 5-phosphate: step 6/6. Its function is as follows. Catalyzes the conversion of 1-hydroxy-2-methyl-2-(E)-butenyl 4-diphosphate (HMBPP) into a mixture of isopentenyl diphosphate (IPP) and dimethylallyl diphosphate (DMAPP). Acts in the terminal step of the DOXP/MEP pathway for isoprenoid precursor biosynthesis. The chain is 4-hydroxy-3-methylbut-2-enyl diphosphate reductase from Wolbachia pipientis subsp. Culex pipiens (strain wPip).